The following is a 133-amino-acid chain: Ribosome-binding factor A (133 aa).

Belongs to the RbfA family. In terms of assembly, monomer. Binds 30S ribosomal subunits, but not 50S ribosomal subunits or 70S ribosomes.

It localises to the cytoplasm. In terms of biological role, one of several proteins that assist in the late maturation steps of the functional core of the 30S ribosomal subunit. Associates with free 30S ribosomal subunits (but not with 30S subunits that are part of 70S ribosomes or polysomes). Required for efficient processing of 16S rRNA. May interact with the 5'-terminal helix region of 16S rRNA. In Salmonella typhimurium (strain LT2 / SGSC1412 / ATCC 700720), this protein is Ribosome-binding factor A.